Reading from the N-terminus, the 544-residue chain is Probable protein kinase UbiB (544 aa).

Residues 123–504 form the Protein kinase domain; it reads DFDENALASA…QRWQKKMFVL (382 aa). Residues 129–137 and lysine 155 contribute to the ATP site; that span reads LASASIAQV. Aspartate 290 functions as the Proton acceptor in the catalytic mechanism. 2 helical membrane passes run 501–521 and 523–543; these read MFVL…FAAL and LAIS…GFLL.

It belongs to the ABC1 family. UbiB subfamily.

The protein resides in the cell inner membrane. Its pathway is cofactor biosynthesis; ubiquinone biosynthesis [regulation]. Is probably a protein kinase regulator of UbiI activity which is involved in aerobic coenzyme Q (ubiquinone) biosynthesis. In Histophilus somni (strain 129Pt) (Haemophilus somnus), this protein is Probable protein kinase UbiB.